We begin with the raw amino-acid sequence, 119 residues long: uncharacterized protein (119 aa).

This is an uncharacterized protein from Bacillus subtilis (strain 168).